We begin with the raw amino-acid sequence, 136 residues long: METGLRWLLLVAVLKGVQCQSVKESEGGLFKPMDTLTLTCTVSGFSLSSYGVNWVRQAPGKGLEWIGYIGTGTYLANWAKSRSTITSNTNENTVTLKMTSLTGADTATYFCGSGANIENEFFNAIWGPGTLVTVSS.

An N-terminal signal peptide occupies residues 1–19 (METGLRWLLLVAVLKGVQC). At glutamine 20 the chain carries Pyrrolidone carboxylic acid. The Ig-like domain maps to 20 to 127 (QSVKESEGGL…ENEFFNAIWG (108 aa)).

This chain is Ig heavy chain V-A2 region P-MU-3, found in Oryctolagus cuniculus (Rabbit).